Here is a 503-residue protein sequence, read N- to C-terminus: ATP synthase subunit alpha (503 aa).

170-177 (GDKQTGKT) is an ATP binding site.

Belongs to the ATPase alpha/beta chains family. In terms of assembly, F-type ATPases have 2 components, CF(1) - the catalytic core - and CF(0) - the membrane proton channel. CF(1) has five subunits: alpha(3), beta(3), gamma(1), delta(1), epsilon(1). CF(0) has three main subunits: a(1), b(2) and c(9-12). The alpha and beta chains form an alternating ring which encloses part of the gamma chain. CF(1) is attached to CF(0) by a central stalk formed by the gamma and epsilon chains, while a peripheral stalk is formed by the delta and b chains.

The protein resides in the cell inner membrane. It catalyses the reaction ATP + H2O + 4 H(+)(in) = ADP + phosphate + 5 H(+)(out). Produces ATP from ADP in the presence of a proton gradient across the membrane. The alpha chain is a regulatory subunit. This Helicobacter pylori (strain G27) protein is ATP synthase subunit alpha.